The sequence spans 205 residues: Outer-membrane lipoprotein carrier protein (205 aa).

A signal peptide spans 1–19 (MKKIIICFIFVFSINVSFA).

Belongs to the LolA family. In terms of assembly, monomer.

The protein localises to the periplasm. Participates in the translocation of lipoproteins from the inner membrane to the outer membrane. Only forms a complex with a lipoprotein if the residue after the N-terminal Cys is not an aspartate (The Asp acts as a targeting signal to indicate that the lipoprotein should stay in the inner membrane). In Francisella tularensis subsp. tularensis (strain FSC 198), this protein is Outer-membrane lipoprotein carrier protein.